Consider the following 194-residue polypeptide: Thioredoxin peroxidase (194 aa).

A Thioredoxin domain is found at 2 to 160; that stretch reads LQPNMPAPNF…ALRLLDAFIF (159 aa). The Cysteine sulfenic acid (-SOH) intermediate role is filled by C47.

Belongs to the peroxiredoxin family. AhpC/Prx1 subfamily. In terms of assembly, homodimer; disulfide-linked, upon oxidation.

The enzyme catalyses a hydroperoxide + [thioredoxin]-dithiol = an alcohol + [thioredoxin]-disulfide + H2O. Its function is as follows. Antioxidant. Could be involved in protection against reactive oxygen species (ROS) generated by metabolic processes and/or protection of the parasite against ROS released by immune effector cells. Thiol-specific peroxidase that catalyzes the reduction of hydrogen peroxide and organic hydroperoxides to water and alcohols, respectively. Plays a role in cell protection against oxidative stress by detoxifying peroxides and as sensor of hydrogen peroxide-mediated signaling events. The polypeptide is Thioredoxin peroxidase (Fasciola hepatica (Liver fluke)).